A 281-amino-acid polypeptide reads, in one-letter code: NADPH-dependent 7-cyano-7-deazaguanine reductase (281 aa).

87–89 (IES) contributes to the substrate binding site. 89–90 (SK) serves as a coordination point for NADPH. Cysteine 188 serves as the catalytic Thioimide intermediate. The active-site Proton donor is aspartate 195. 227-228 (HE) is a substrate binding site. 256 to 257 (RG) is an NADPH binding site. A disordered region spans residues 261-281 (INPYRSTEQDKPAHNNRMARQ).

Belongs to the GTP cyclohydrolase I family. QueF type 2 subfamily. Homodimer.

Its subcellular location is the cytoplasm. The catalysed reaction is 7-aminomethyl-7-carbaguanine + 2 NADP(+) = 7-cyano-7-deazaguanine + 2 NADPH + 3 H(+). The protein operates within tRNA modification; tRNA-queuosine biosynthesis. Its function is as follows. Catalyzes the NADPH-dependent reduction of 7-cyano-7-deazaguanine (preQ0) to 7-aminomethyl-7-deazaguanine (preQ1). The polypeptide is NADPH-dependent 7-cyano-7-deazaguanine reductase (Vibrio campbellii (strain ATCC BAA-1116)).